Reading from the N-terminus, the 112-residue chain is Ribonuclease P protein component (112 aa).

This sequence belongs to the RnpA family. In terms of assembly, consists of a catalytic RNA component (M1 or rnpB) and a protein subunit.

The catalysed reaction is Endonucleolytic cleavage of RNA, removing 5'-extranucleotides from tRNA precursor.. In terms of biological role, RNaseP catalyzes the removal of the 5'-leader sequence from pre-tRNA to produce the mature 5'-terminus. It can also cleave other RNA substrates such as 4.5S RNA. The protein component plays an auxiliary but essential role in vivo by binding to the 5'-leader sequence and broadening the substrate specificity of the ribozyme. In Mycoplasmopsis synoviae (strain 53) (Mycoplasma synoviae), this protein is Ribonuclease P protein component.